The following is a 463-amino-acid chain: tRNA-splicing endonuclease subunit Sen2 (463 aa).

A phosphoserine mark is found at S32 and S147. The interval 120–213 is disordered; sequence HDESTVQKIL…VASPSSLNGH (94 aa). 2 stretches are compositionally biased toward basic and acidic residues: residues 139–149 and 159–170; these read PYRERKGESPQ and SSLEGREGKDEL. Residues Y367 and H375 contribute to the active site. S406, S409, and S413 each carry phosphoserine. The active site involves K414.

The protein belongs to the tRNA-intron endonuclease family. As to quaternary structure, tRNA splicing endonuclease is a heterotetramer composed of TSEN2, TSEN15, TSEN34/LENG5 and TSEN54. tRNA splicing endonuclease complex also contains proteins of the pre-mRNA 3'-end processing machinery such as CLP1, CPSF1, CPSF4 and CSTF2.

It localises to the nucleus. The protein localises to the nucleolus. It carries out the reaction pretRNA = a 3'-half-tRNA molecule with a 5'-OH end + a 5'-half-tRNA molecule with a 2',3'-cyclic phosphate end + an intron with a 2',3'-cyclic phosphate and a 5'-hydroxyl terminus.. Constitutes one of the two catalytic subunit of the tRNA-splicing endonuclease complex, a complex responsible for identification and cleavage of the splice sites in pre-tRNA. It cleaves pre-tRNA at the 5'- and 3'-splice sites to release the intron. The products are an intron and two tRNA half-molecules bearing 2',3'-cyclic phosphate and 5'-OH termini. There are no conserved sequences at the splice sites, but the intron is invariably located at the same site in the gene, placing the splice sites an invariant distance from the constant structural features of the tRNA body. Probably carries the active site for 5'-splice site cleavage. The tRNA splicing endonuclease is also involved in mRNA processing via its association with pre-mRNA 3'-end processing factors, establishing a link between pre-tRNA splicing and pre-mRNA 3'-end formation, suggesting that the endonuclease subunits function in multiple RNA-processing events. The protein is tRNA-splicing endonuclease subunit Sen2 (Tsen2) of Rattus norvegicus (Rat).